A 284-amino-acid chain; its full sequence is Co-chaperone protein DjlA (284 aa).

At 1 to 6 the chain is on the periplasmic side; it reads MHIFGK. Residues 7 to 30 form a helical membrane-spanning segment; it reads ILGAFFGLLLGGPFGLLFGLFIGH. At 31–284 the chain is on the cytoplasmic side; the sequence is QFDKARRLSQ…DLIKKVKGFK (254 aa). The J domain maps to 218 to 284; sequence DAYKILDVSP…DLIKKVKGFK (67 aa).

As to quaternary structure, homodimer.

It is found in the cell inner membrane. Its function is as follows. Regulatory DnaK co-chaperone. Direct interaction between DnaK and DjlA is needed for the induction of the wcaABCDE operon, involved in the synthesis of a colanic acid polysaccharide capsule, possibly through activation of the RcsB/RcsC phosphotransfer signaling pathway. The colanic acid capsule may help the bacterium survive conditions outside the host. The protein is Co-chaperone protein DjlA of Vibrio parahaemolyticus serotype O3:K6 (strain RIMD 2210633).